Here is a 280-residue protein sequence, read N- to C-terminus: 2,3,4,5-tetrahydropyridine-2,6-dicarboxylate N-succinyltransferase (280 aa).

The protein belongs to the transferase hexapeptide repeat family.

It localises to the cytoplasm. The catalysed reaction is (S)-2,3,4,5-tetrahydrodipicolinate + succinyl-CoA + H2O = (S)-2-succinylamino-6-oxoheptanedioate + CoA. It functions in the pathway amino-acid biosynthesis; L-lysine biosynthesis via DAP pathway; LL-2,6-diaminopimelate from (S)-tetrahydrodipicolinate (succinylase route): step 1/3. The polypeptide is 2,3,4,5-tetrahydropyridine-2,6-dicarboxylate N-succinyltransferase (Methylorubrum extorquens (strain PA1) (Methylobacterium extorquens)).